We begin with the raw amino-acid sequence, 1160 residues long: Protein translocase subunit SecA (1160 aa).

Residues Gln-162 and 180 to 184 (GEGKT) contribute to the ATP site. The segment at 342 to 362 (LLEEKEEAEEEGDSRRAQELE) is disordered. Positions 344 to 353 (EEKEEAEEEG) are enriched in acidic residues. Position 726 (Asp-726) interacts with ATP. The segment at 1060 to 1134 (EVQTEGQGPR…RNEYVTVRNN (75 aa)) is disordered. Over residues 1074–1083 (QRNAQTQHDS) the composition is skewed to polar residues. Residues 1104–1115 (AAERDPTVEEKQ) show a composition bias toward basic and acidic residues.

It belongs to the SecA family. As to quaternary structure, monomer and homodimer. Part of the essential Sec protein translocation apparatus which comprises SecA, SecYEG and auxiliary proteins SecDF. Other proteins may also be involved.

The protein localises to the cell inner membrane. Its subcellular location is the cytoplasm. The enzyme catalyses ATP + H2O + cellular proteinSide 1 = ADP + phosphate + cellular proteinSide 2.. In terms of biological role, part of the Sec protein translocase complex. Interacts with the SecYEG preprotein conducting channel. Has a central role in coupling the hydrolysis of ATP to the transfer of proteins into and across the cell membrane, serving as an ATP-driven molecular motor driving the stepwise translocation of polypeptide chains across the membrane. In Salinibacter ruber (strain DSM 13855 / M31), this protein is Protein translocase subunit SecA.